Consider the following 238-residue polypeptide: Purine nucleoside phosphorylase DeoD-type (238 aa).

His-4 lines the a purine D-ribonucleoside pocket. Residues Gly-20, Arg-24, Arg-43, and 87–90 each bind phosphate; that span reads RVGS. A purine D-ribonucleoside contacts are provided by residues 179-181 and 203-204; these read EME and SD. Catalysis depends on Asp-204, which acts as the Proton donor.

The protein belongs to the PNP/UDP phosphorylase family. In terms of assembly, homohexamer; trimer of homodimers.

The catalysed reaction is a purine D-ribonucleoside + phosphate = a purine nucleobase + alpha-D-ribose 1-phosphate. It carries out the reaction a purine 2'-deoxy-D-ribonucleoside + phosphate = a purine nucleobase + 2-deoxy-alpha-D-ribose 1-phosphate. In terms of biological role, catalyzes the reversible phosphorolytic breakdown of the N-glycosidic bond in the beta-(deoxy)ribonucleoside molecules, with the formation of the corresponding free purine bases and pentose-1-phosphate. This Haemophilus ducreyi (strain 35000HP / ATCC 700724) protein is Purine nucleoside phosphorylase DeoD-type.